A 297-amino-acid polypeptide reads, in one-letter code: Acetylglutamate kinase (297 aa).

Residues 68 to 69 (GG), Arg90, and Asn195 each bind substrate.

This sequence belongs to the acetylglutamate kinase family. ArgB subfamily.

The protein localises to the cytoplasm. It carries out the reaction N-acetyl-L-glutamate + ATP = N-acetyl-L-glutamyl 5-phosphate + ADP. The protein operates within amino-acid biosynthesis; L-arginine biosynthesis; N(2)-acetyl-L-ornithine from L-glutamate: step 2/4. In terms of biological role, catalyzes the ATP-dependent phosphorylation of N-acetyl-L-glutamate. This is Acetylglutamate kinase from Mesorhizobium japonicum (strain LMG 29417 / CECT 9101 / MAFF 303099) (Mesorhizobium loti (strain MAFF 303099)).